Here is a 410-residue protein sequence, read N- to C-terminus: Argininosuccinate synthase (410 aa).

ATP is bound by residues 11-19 and Ala37; that span reads AYSGGLDTS. Residues Tyr88 and Ser93 each coordinate L-citrulline. Residue 116–124 coordinates ATP; the sequence is SHGCTGKGN. The L-aspartate site is built by Thr120, Asn124, and Asp125. Asn124 contributes to the L-citrulline binding site. L-citrulline-binding residues include Arg128, Ser181, Ser190, Glu269, and Tyr281.

The protein belongs to the argininosuccinate synthase family. Type 1 subfamily. Homotetramer.

Its subcellular location is the cytoplasm. It catalyses the reaction L-citrulline + L-aspartate + ATP = 2-(N(omega)-L-arginino)succinate + AMP + diphosphate + H(+). It participates in amino-acid biosynthesis; L-arginine biosynthesis; L-arginine from L-ornithine and carbamoyl phosphate: step 2/3. In Schizosaccharomyces pombe (strain 972 / ATCC 24843) (Fission yeast), this protein is Argininosuccinate synthase (arg12).